The chain runs to 134 residues: Large ribosomal subunit protein eL32 (134 aa).

It belongs to the eukaryotic ribosomal protein eL32 family.

The chain is Large ribosomal subunit protein eL32 (RpL32) from Drosophila acanthoptera (Fruit fly).